The primary structure comprises 176 residues: Ribosome rescue factor SmrB (176 aa).

Residues 98 to 173 enclose the Smr domain; it reads LDLHGLTQMQ…GTAAILLLVE (76 aa).

This sequence belongs to the SmrB family. As to quaternary structure, associates with collided ribosomes, but not with correctly translating polysomes.

Acts as a ribosome collision sensor. Detects stalled/collided disomes (pairs of ribosomes where the leading ribosome is stalled and a second ribosome has collided with it) and endonucleolytically cleaves mRNA at the 5' boundary of the stalled ribosome. Stalled/collided disomes form a new interface (primarily via the 30S subunits) that binds SmrB. Cleaved mRNA becomes available for tmRNA ligation, leading to ribosomal subunit dissociation and rescue of stalled ribosomes. This chain is Ribosome rescue factor SmrB, found in Serratia proteamaculans (strain 568).